The chain runs to 68 residues: Copper transport protein ATOX1 (68 aa).

Residues 1–63 enclose the HMA domain; sequence MPKHEFSVDM…TLGKTGKAVS (63 aa). Cu cation is bound by residues Cys-12 and Cys-15. Ser-47 is subject to Phosphoserine. The residue at position 60 (Lys-60) is an N6-acetyllysine.

This sequence belongs to the ATX1 family. In terms of assembly, homodimer. Interacts with ATP7B. Interacts with ATP7A. Interacts (via dimer form) with SLC31A1 (via C-terminal domain); this interaction improves ATOX1 stability and controls intracellular Cu(I) levels.

Its function is as follows. Binds and deliver cytosolic copper to the copper ATPase proteins. May be important in cellular antioxidant defense. The polypeptide is Copper transport protein ATOX1 (Bos taurus (Bovine)).